The primary structure comprises 58 residues: Alpha-conotoxin AuIB (58 aa).

Positions Met-1–Ser-16 are cleaved as a signal peptide. The propeptide occupies Phe-17–Lys-39. Intrachain disulfides connect Cys-41/Cys-47 and Cys-42/Cys-54. Cys-54 bears the Cysteine amide mark.

In terms of tissue distribution, expressed by the venom duct.

The protein resides in the secreted. In terms of biological role, alpha-conotoxins act on postsynaptic membranes, they bind to the nicotinic acetylcholine receptors (nAChR) and thus inhibit them. This toxin blocks mammalian nAChR alpha-3-beta-4/CHRNA3-CHRNB4 subunits. Also exhibits inhibition of D.melanogaster alpha-7/CHRNA7 nAChRs. This is Alpha-conotoxin AuIB from Conus aulicus (Princely cone).